We begin with the raw amino-acid sequence, 651 residues long: Beta-glucuronidase (651 aa).

Positions 1-22 are cleaved as a signal peptide; it reads MARGSAVAWAAFGPLLWGCALG. N-linked (GlcNAc...) asparagine glycosylation is found at asparagine 173, asparagine 190, asparagine 272, and asparagine 420. Catalysis depends on glutamate 451, which acts as the Proton donor. Asparagine 631 is a glycosylation site (N-linked (GlcNAc...) asparagine).

It belongs to the glycosyl hydrolase 2 family. In terms of assembly, homotetramer.

The protein localises to the lysosome. The enzyme catalyses a beta-D-glucuronoside + H2O = D-glucuronate + an alcohol. With respect to regulation, inhibited by L-aspartic acid. In terms of biological role, plays an important role in the degradation of dermatan and keratan sulfates. The polypeptide is Beta-glucuronidase (GUSB) (Pongo abelii (Sumatran orangutan)).